The sequence spans 95 residues: Integration host factor subunit beta (95 aa).

The protein belongs to the bacterial histone-like protein family. In terms of assembly, heterodimer of an alpha and a beta chain.

In terms of biological role, this protein is one of the two subunits of integration host factor, a specific DNA-binding protein that functions in genetic recombination as well as in transcriptional and translational control. Involved in hydrogenase gene expression. The protein is Integration host factor subunit beta (ihfB) of Rhodobacter capsulatus (Rhodopseudomonas capsulata).